The following is an 87-amino-acid chain: Small ribosomal subunit protein uS12m (87 aa).

The protein belongs to the universal ribosomal protein uS12 family.

It localises to the mitochondrion matrix. The protein localises to the kinetoplast. Its function is as follows. Protein S12 is involved in the translation initiation step. The polypeptide is Small ribosomal subunit protein uS12m (RPS12) (Trypanoplasma borreli).